A 318-amino-acid chain; its full sequence is Homoserine O-succinyltransferase (318 aa).

C142 functions as the Acyl-thioester intermediate in the catalytic mechanism. Residues K163 and S192 each coordinate substrate. H235 serves as the catalytic Proton acceptor. E237 is a catalytic residue. R249 contacts substrate.

Belongs to the MetA family.

It is found in the cytoplasm. The catalysed reaction is L-homoserine + succinyl-CoA = O-succinyl-L-homoserine + CoA. It functions in the pathway amino-acid biosynthesis; L-methionine biosynthesis via de novo pathway; O-succinyl-L-homoserine from L-homoserine: step 1/1. Its function is as follows. Transfers a succinyl group from succinyl-CoA to L-homoserine, forming succinyl-L-homoserine. This Shewanella putrefaciens (strain CN-32 / ATCC BAA-453) protein is Homoserine O-succinyltransferase.